Here is a 311-residue protein sequence, read N- to C-terminus: Methionyl-tRNA formyltransferase (311 aa).

Residue 112–115 participates in (6S)-5,6,7,8-tetrahydrofolate binding; the sequence is SLLP.

It belongs to the Fmt family.

It catalyses the reaction L-methionyl-tRNA(fMet) + (6R)-10-formyltetrahydrofolate = N-formyl-L-methionyl-tRNA(fMet) + (6S)-5,6,7,8-tetrahydrofolate + H(+). Functionally, attaches a formyl group to the free amino group of methionyl-tRNA(fMet). The formyl group appears to play a dual role in the initiator identity of N-formylmethionyl-tRNA by promoting its recognition by IF2 and preventing the misappropriation of this tRNA by the elongation apparatus. In Rhizobium etli (strain ATCC 51251 / DSM 11541 / JCM 21823 / NBRC 15573 / CFN 42), this protein is Methionyl-tRNA formyltransferase.